The primary structure comprises 595 residues: Actin-histidine N-methyltransferase (595 aa).

The tract at residues 1–22 (MGKKSRVKTQKSGTGATATVSP) is disordered. Residues 10–20 (QKSGTGATATV) are compositionally biased toward polar residues. Residues Arg75, 104 to 106 (EGF), Arg254, 275 to 279 (DMCNH), and 325 to 327 (SGF) each bind S-adenosyl-L-methionine. The SET domain occupies 94–314 (EGFEMVNFKE…AGEQIYIFYG (221 aa)). At Ser513 the chain carries Phosphoserine. Residues 549–563 (ENGLVNGENSIPNGT) show a composition bias toward polar residues. The disordered stretch occupies residues 549-595 (ENGLVNGENSIPNGTRSEDENLNQEESKRAVEDAKGSSSDRADAVKE). A compositionally biased stretch (basic and acidic residues) spans 573–595 (EESKRAVEDAKGSSSDRADAVKE).

It belongs to the class V-like SAM-binding methyltransferase superfamily. SETD3 actin-histidine methyltransferase family. Interacts with MYOD1. In terms of processing, phosphorylated by GSK3B, which is required for recognition by the SCF(FBXW7) complex and subsequent degradation. Post-translationally, ubiquitinated by the SCF(FBXW7) complex following phosphorylation by GSK3B, leading to its degradation by the proteasome.

It localises to the cytoplasm. The protein resides in the nucleus. It carries out the reaction L-histidyl-[protein] + S-adenosyl-L-methionine = N(tele)-methyl-L-histidyl-[protein] + S-adenosyl-L-homocysteine + H(+). Protein-histidine N-methyltransferase that specifically mediates 3-methylhistidine (tele-methylhistidine) methylation of actin at 'His-73'. Histidine methylation of actin is required for smooth muscle contraction of the laboring uterus during delivery. Does not have protein-lysine N-methyltransferase activity and probably only catalyzes histidine methylation of actin. The polypeptide is Actin-histidine N-methyltransferase (Callithrix jacchus (White-tufted-ear marmoset)).